The primary structure comprises 366 residues: Carbamoyl phosphate synthase small chain (366 aa).

The interval 1–172 (MYGILVLEDG…TYNAENEKTS (172 aa)) is CPSase. 3 residues coordinate L-glutamine: S45, G220, and G222. A Glutamine amidotransferase type-1 domain is found at 172–363 (SCVLIDCGVK…VELGIKFKAE (192 aa)). The active-site Nucleophile is the C247. L-glutamine-binding residues include L248, Q251, N289, G291, and F292. Active-site residues include H336 and E338.

This sequence belongs to the CarA family. In terms of assembly, composed of two chains; the small (or glutamine) chain promotes the hydrolysis of glutamine to ammonia, which is used by the large (or ammonia) chain to synthesize carbamoyl phosphate. Tetramer of heterodimers (alpha,beta)4.

The enzyme catalyses hydrogencarbonate + L-glutamine + 2 ATP + H2O = carbamoyl phosphate + L-glutamate + 2 ADP + phosphate + 2 H(+). It carries out the reaction L-glutamine + H2O = L-glutamate + NH4(+). The protein operates within amino-acid biosynthesis; L-arginine biosynthesis; carbamoyl phosphate from bicarbonate: step 1/1. It functions in the pathway pyrimidine metabolism; UMP biosynthesis via de novo pathway; (S)-dihydroorotate from bicarbonate: step 1/3. Its function is as follows. Small subunit of the glutamine-dependent carbamoyl phosphate synthetase (CPSase). CPSase catalyzes the formation of carbamoyl phosphate from the ammonia moiety of glutamine, carbonate, and phosphate donated by ATP, constituting the first step of 2 biosynthetic pathways, one leading to arginine and/or urea and the other to pyrimidine nucleotides. The small subunit (glutamine amidotransferase) binds and cleaves glutamine to supply the large subunit with the substrate ammonia. This is Carbamoyl phosphate synthase small chain from Methanococcus maripaludis (strain C7 / ATCC BAA-1331).